A 923-amino-acid polypeptide reads, in one-letter code: Alanine--tRNA ligase (923 aa).

4 residues coordinate Zn(2+): His-614, His-618, Cys-717, and His-721. A disordered region spans residues 884-903 (KVGGGGGGPPDFAQGGGPDA). Residues 885–901 (VGGGGGGPPDFAQGGGP) are compositionally biased toward gly residues.

It belongs to the class-II aminoacyl-tRNA synthetase family. It depends on Zn(2+) as a cofactor.

It is found in the cytoplasm. The enzyme catalyses tRNA(Ala) + L-alanine + ATP = L-alanyl-tRNA(Ala) + AMP + diphosphate. Catalyzes the attachment of alanine to tRNA(Ala) in a two-step reaction: alanine is first activated by ATP to form Ala-AMP and then transferred to the acceptor end of tRNA(Ala). Also edits incorrectly charged Ser-tRNA(Ala) and Gly-tRNA(Ala) via its editing domain. The protein is Alanine--tRNA ligase of Haloquadratum walsbyi (strain DSM 16790 / HBSQ001).